The chain runs to 269 residues: UPF0739 protein C1orf74 (269 aa).

This sequence belongs to the UPF0739 family.

In Homo sapiens (Human), this protein is UPF0739 protein C1orf74 (C1orf74).